Here is a 497-residue protein sequence, read N- to C-terminus: Probable cytosol aminopeptidase (497 aa).

Mn(2+) contacts are provided by Lys267 and Asp272. The active site involves Lys279. 3 residues coordinate Mn(2+): Asp290, Asp349, and Glu351. Arg353 is an active-site residue.

The protein belongs to the peptidase M17 family. Requires Mn(2+) as cofactor.

The protein localises to the cytoplasm. It carries out the reaction Release of an N-terminal amino acid, Xaa-|-Yaa-, in which Xaa is preferably Leu, but may be other amino acids including Pro although not Arg or Lys, and Yaa may be Pro. Amino acid amides and methyl esters are also readily hydrolyzed, but rates on arylamides are exceedingly low.. The catalysed reaction is Release of an N-terminal amino acid, preferentially leucine, but not glutamic or aspartic acids.. In terms of biological role, presumably involved in the processing and regular turnover of intracellular proteins. Catalyzes the removal of unsubstituted N-terminal amino acids from various peptides. The protein is Probable cytosol aminopeptidase of Pseudomonas putida (strain GB-1).